Here is a 180-residue protein sequence, read N- to C-terminus: ATP-dependent protease subunit HslV (180 aa).

Threonine 2 is an active-site residue. 3 residues coordinate Na(+): glycine 158, cysteine 161, and threonine 164.

This sequence belongs to the peptidase T1B family. HslV subfamily. As to quaternary structure, a double ring-shaped homohexamer of HslV is capped on each side by a ring-shaped HslU homohexamer. The assembly of the HslU/HslV complex is dependent on binding of ATP.

Its subcellular location is the cytoplasm. The enzyme catalyses ATP-dependent cleavage of peptide bonds with broad specificity.. With respect to regulation, allosterically activated by HslU binding. In terms of biological role, protease subunit of a proteasome-like degradation complex believed to be a general protein degrading machinery. The protein is ATP-dependent protease subunit HslV of Baumannia cicadellinicola subsp. Homalodisca coagulata.